The chain runs to 68 residues: DNA-directed RNA polymerase subunit omega (68 aa).

Belongs to the RNA polymerase subunit omega family. The RNAP catalytic core consists of 2 alpha, 1 beta, 1 beta' and 1 omega subunit. When a sigma factor is associated with the core the holoenzyme is formed, which can initiate transcription.

It carries out the reaction RNA(n) + a ribonucleoside 5'-triphosphate = RNA(n+1) + diphosphate. Functionally, promotes RNA polymerase assembly. Latches the N- and C-terminal regions of the beta' subunit thereby facilitating its interaction with the beta and alpha subunits. The polypeptide is DNA-directed RNA polymerase subunit omega (Nitrosospira multiformis (strain ATCC 25196 / NCIMB 11849 / C 71)).